An 85-amino-acid chain; its full sequence is Small ribosomal subunit protein bS16c (85 aa).

The protein belongs to the bacterial ribosomal protein bS16 family.

The protein localises to the plastid. Its subcellular location is the chloroplast. The protein is Small ribosomal subunit protein bS16c of Cucumis sativus (Cucumber).